We begin with the raw amino-acid sequence, 573 residues long: MHALSGFSLVSLLSLGYLSWDWAKPGLVADGPAEAEDQPSAAPPQPPHIIFILTDDQGYHDVGYHGSDIETPTLDRLAAEGVKLENYYIQPICTPSRSQLLTGRYQIHTGLQHSIIRPRQPNCLPLDQVTLPQKLQEAGYSTHMVGKWHLGFYRKECLPTRRGFDTFLGSLTGNVDYYTYDNCDGPGVCGFDLHEGESVAWGLSGQYSTMLYAQRASHILASHSPQKPLFLYVAFQAVHTPLQSPREYLYRYRTMGNVARRKYAAMVTCMDEAVRNITWALKRYGFYNNSVIIFSSDNGGQTFSGGSNWPLRGRKGTYWEGGVRGLGFVHSPLLKKKRRTSRALVHITDWYPTLVGLAGGTTSAADGLDGYDVWPAISEGRASPRTEILHNIDPLYNHARHGSLEGGFGIWNTAVQAAIRVGEWKLLTGDPGYGDWIPPQTLASFPGSWWNLERMASIRQAVWLFNISADPYEREDLADQRPDVVRTLLARLADYNRTAIPVRYPAANPRAHPDFNGGAWGPWASDEDEEEEDEEEEGRARSFPRGRRKKKCKICKLRSFFRKLNTRLMSHRI.

The signal sequence occupies residues 1–23; it reads MHALSGFSLVSLLSLGYLSWDWA. Residues Asp-55, Asp-56, and Cys-93 each contribute to the Ca(2+) site. Catalysis depends on Cys-93, which acts as the Nucleophile. Cys-93 bears the 3-oxoalanine (Cys) mark. Lys-147 is a substrate binding site. The active site involves His-149. His-239 is a substrate binding site. N-linked (GlcNAc...) asparagine glycans are attached at residues Asn-276 and Asn-288. Positions 297 and 298 each coordinate Ca(2+). Position 315 (Lys-315) interacts with substrate. 2 N-linked (GlcNAc...) asparagine glycosylation sites follow: Asn-466 and Asn-496. A disordered region spans residues 506-550; the sequence is AANPRAHPDFNGGAWGPWASDEDEEEEDEEEEGRARSFPRGRRKK. A compositionally biased stretch (acidic residues) spans 525–537; it reads SDEDEEEEDEEEE.

Belongs to the sulfatase family. The cofactor is Ca(2+). In terms of processing, the oxidation of Cys-93 residue to 3-oxoalanine (also known as C(alpha)-formylglycine) by SUMF1/Sulfatase-modifying factor 1, seems critical for catalytic activity.

It localises to the secreted. Its subcellular location is the endoplasmic reticulum. Functionally, displays arylsulfatase activity at neutral pH, when co-expressed with SUMF1; arylsulfatase activity is measured in the secretion medium of retinal cell line, but no activity is recorded when measured in cell extracts. This is Arylsulfatase I (Arsi) from Rattus norvegicus (Rat).